We begin with the raw amino-acid sequence, 276 residues long: Mitochondrial distribution and morphology protein 12 (276 aa).

In terms of domain architecture, SMP-LTD spans 1–276; it reads MSIDIQWNLL…FVWPSYFTLY (276 aa). The interval 68–104 is disordered; sequence TLYSDDSSSLDDEESDREEENMTELPPYGATENGVHK. Residues 75-89 are compositionally biased toward acidic residues; the sequence is SSLDDEESDREEENM.

The protein belongs to the MDM12 family. Component of the ER-mitochondria encounter structure (ERMES) or MDM complex, composed of mmm1, mdm10, mdm12 and mdm34. A mmm1 homodimer associates with one molecule of mdm12 on each side in a pairwise head-to-tail manner, and the SMP-LTD domains of mmm1 and mdm12 generate a continuous hydrophobic tunnel for phospholipid trafficking.

It localises to the mitochondrion outer membrane. Its subcellular location is the endoplasmic reticulum membrane. In terms of biological role, component of the ERMES/MDM complex, which serves as a molecular tether to connect the endoplasmic reticulum (ER) and mitochondria. Components of this complex are involved in the control of mitochondrial shape and protein biogenesis, and function in nonvesicular lipid trafficking between the ER and mitochondria. Mdm12 is required for the interaction of the ER-resident membrane protein mmm1 and the outer mitochondrial membrane-resident beta-barrel protein mdm10. The mdm12-mmm1 subcomplex functions in the major beta-barrel assembly pathway that is responsible for biogenesis of all mitochondrial outer membrane beta-barrel proteins, and acts in a late step after the SAM complex. The mdm10-mdm12-mmm1 subcomplex further acts in the TOM40-specific pathway after the action of the mdm12-mmm1 complex. Essential for establishing and maintaining the structure of mitochondria and maintenance of mtDNA nucleoids. The chain is Mitochondrial distribution and morphology protein 12 from Schizosaccharomyces japonicus (strain yFS275 / FY16936) (Fission yeast).